The following is a 206-amino-acid chain: Probable thymidylate kinase (206 aa).

Residue 10–17 (GIDGSGKS) coordinates ATP.

Belongs to the thymidylate kinase family.

It catalyses the reaction dTMP + ATP = dTDP + ADP. The sequence is that of Probable thymidylate kinase from Methanosarcina mazei (strain ATCC BAA-159 / DSM 3647 / Goe1 / Go1 / JCM 11833 / OCM 88) (Methanosarcina frisia).